Consider the following 319-residue polypeptide: Acetyl-coenzyme A carboxylase carboxyl transferase subunit alpha (319 aa).

The CoA carboxyltransferase C-terminal domain occupies 43–296 (LKQKSVELTQ…KTQLLLDLVE (254 aa)).

Belongs to the AccA family. Acetyl-CoA carboxylase is a heterohexamer composed of biotin carboxyl carrier protein (AccB), biotin carboxylase (AccC) and two subunits each of ACCase subunit alpha (AccA) and ACCase subunit beta (AccD).

It is found in the cytoplasm. The enzyme catalyses N(6)-carboxybiotinyl-L-lysyl-[protein] + acetyl-CoA = N(6)-biotinyl-L-lysyl-[protein] + malonyl-CoA. Its pathway is lipid metabolism; malonyl-CoA biosynthesis; malonyl-CoA from acetyl-CoA: step 1/1. In terms of biological role, component of the acetyl coenzyme A carboxylase (ACC) complex. First, biotin carboxylase catalyzes the carboxylation of biotin on its carrier protein (BCCP) and then the CO(2) group is transferred by the carboxyltransferase to acetyl-CoA to form malonyl-CoA. The polypeptide is Acetyl-coenzyme A carboxylase carboxyl transferase subunit alpha (Blochmanniella floridana).